A 441-amino-acid polypeptide reads, in one-letter code: Transcription factor bHLH90 (441 aa).

The bHLH domain maps to asparagine 260–leucine 309.

Homodimer. In terms of tissue distribution, expressed constitutively in roots, leaves, stems, and flowers.

The protein resides in the nucleus. This chain is Transcription factor bHLH90 (BHLH90), found in Arabidopsis thaliana (Mouse-ear cress).